Reading from the N-terminus, the 28-residue chain is Conotoxin de7b (28 aa).

3 cysteine pairs are disulfide-bonded: Cys-2-Cys-18, Cys-9-Cys-22, and Cys-17-Cys-27. The residue at position 4 (Pro-4) is a 4-hydroxyproline; partial. A 4-carboxyglutamate; partial modification is found at Glu-7. Pro-14 carries the 4-hydroxyproline; partial modification.

As to expression, expressed by the venom duct.

Its subcellular location is the secreted. Its function is as follows. May inhibit sodium (Nav) or calcium channels (Cav). The protein is Conotoxin de7b of Conasprella delessertii (Sozon's cone).